The chain runs to 258 residues: Large ribosomal subunit protein uL3 (258 aa).

It belongs to the universal ribosomal protein uL3 family. As to quaternary structure, part of the 50S ribosomal subunit. Forms a cluster with proteins L14 and L19.

Functionally, one of the primary rRNA binding proteins, it binds directly near the 3'-end of the 23S rRNA, where it nucleates assembly of the 50S subunit. The sequence is that of Large ribosomal subunit protein uL3 from Spiroplasma kunkelii.